A 1525-amino-acid polypeptide reads, in one-letter code: Multidrug resistance-associated protein 1 (1525 aa).

Residues Met-1–Phe-33 are Extracellular-facing. The helical transmembrane segment at Gln-34 to Phe-54 threads the bilayer. Residues Leu-55–Lys-74 lie on the Cytoplasmic side of the membrane. A helical transmembrane segment spans residues Thr-75–Glu-95. Over Arg-96–Ile-100 the chain is Extracellular. The chain crosses the membrane as a helical span at residues Phe-101 to Thr-121. At Phe-122–Gln-133 the chain is on the cytoplasmic side. A helical membrane pass occupies residues Ser-134 to Arg-154. The Extracellular portion of the chain corresponds to Ser-155–Tyr-172. A helical membrane pass occupies residues Val-173–Glu-193. Residues Lys-194 to Val-315 lie on the Cytoplasmic side of the membrane. Residues Leu-316–Leu-336 traverse the membrane as a helical segment. An ABC transmembrane type-1 1 domain is found at Phe-324–Glu-607. At Leu-337–Gly-362 the chain is on the extracellular side. The chain crosses the membrane as a helical span at residues Tyr-363 to Tyr-383. Topologically, residues Phe-384 to Tyr-439 are cytoplasmic. The helical transmembrane segment at Ile-440 to Asn-460 threads the bilayer. Residues Leu-461–Pro-463 lie on the Extracellular side of the membrane. The chain crosses the membrane as a helical span at residues Ser-464–Met-484. Topologically, residues Lys-485–Ala-546 are cytoplasmic. Residues Met-547–Tyr-567 form a helical membrane-spanning segment. Residues Val-568–Asn-589 lie on the Extracellular side of the membrane. A helical membrane pass occupies residues Ile-590–Val-610. The Cytoplasmic portion of the chain corresponds to Ser-611 to Met-961. The ABC transporter 1 domain maps to Ile-641–Thr-865. Residue Gly-675–Ser-682 coordinates ATP. Composition is skewed to polar residues over residues Gln-871–Ser-882 and Ser-908–Glu-928. Disordered stretches follow at residues Gln-871–Asn-891 and Ser-908–Gln-930. Residues Lys-962 to Ala-982 traverse the membrane as a helical segment. The ABC transmembrane type-1 2 domain maps to Ser-969–Thr-1250. Over Ser-983 to Ser-1019 the chain is Extracellular. Residues Gln-1020–Arg-1040 traverse the membrane as a helical segment. Residues His-1041–Pro-1083 are Cytoplasmic-facing. The helical transmembrane segment at Ile-1084 to Leu-1104 threads the bilayer. Position 1105 (Ala-1105) is a topological domain, extracellular. The chain crosses the membrane as a helical span at residues Thr-1106–Phe-1126. The Cytoplasmic segment spans residues Tyr-1127–Leu-1197. A helical membrane pass occupies residues Glu-1198–Lys-1218. Residues Leu-1219–Ser-1220 are Extracellular-facing. Residues Pro-1221–Leu-1241 traverse the membrane as a helical segment. The Cytoplasmic segment spans residues Val-1242–Ala-1525. The 233-residue stretch at Phe-1289–Asp-1521 folds into the ABC transporter 2 domain. Position 1321–1328 (Gly-1321–Ser-1328) interacts with ATP.

Belongs to the ABC transporter superfamily. ABCC family. Conjugate transporter (TC 3.A.1.208) subfamily.

It localises to the cell membrane. The catalysed reaction is ATP + H2O + xenobioticSide 1 = ADP + phosphate + xenobioticSide 2.. The enzyme catalyses an S-substituted glutathione(in) + ATP + H2O = an S-substituted glutathione(out) + ADP + phosphate + H(+). It catalyses the reaction sphing-4-enine 1-phosphate(in) + ATP + H2O = sphing-4-enine 1-phosphate(out) + ADP + phosphate + H(+). It carries out the reaction leukotriene C4(in) + ATP + H2O = leukotriene C4(out) + ADP + phosphate + H(+). The catalysed reaction is 17beta-estradiol 17-O-(beta-D-glucuronate)(in) + ATP + H2O = 17beta-estradiol 17-O-(beta-D-glucuronate)(out) + ADP + phosphate + H(+). The enzyme catalyses 2',3'-cGAMP(in) + ATP + H2O = 2',3'-cGAMP(out) + ADP + phosphate + H(+). Functionally, mediates export of organic anions and drugs from the cytoplasm. Mediates ATP-dependent transport of glutathione and glutathione conjugates, leukotriene C4, estradiol-17-beta-o-glucuronide and other xenobiotics. Hydrolyzes ATP with low efficiency. Mediates ATP-dependent, GSH-independent cyclic GMP-AMP (cGAMP) export. Thus, by limiting intracellular cGAMP concentrations negatively regulates the cGAS-STING pathway. The sequence is that of Multidrug resistance-associated protein 1 from Gallus gallus (Chicken).